A 75-amino-acid polypeptide reads, in one-letter code: Small ribosomal subunit protein bS18 (75 aa).

Belongs to the bacterial ribosomal protein bS18 family. Part of the 30S ribosomal subunit. Forms a tight heterodimer with protein bS6.

Its function is as follows. Binds as a heterodimer with protein bS6 to the central domain of the 16S rRNA, where it helps stabilize the platform of the 30S subunit. The polypeptide is Small ribosomal subunit protein bS18 (Acinetobacter baylyi (strain ATCC 33305 / BD413 / ADP1)).